We begin with the raw amino-acid sequence, 51 residues long: Large ribosomal subunit protein bL33 (51 aa).

Residues 1-23 (MRDKIKLESSAGTGHFYTTTKNK) are disordered. Over residues 10–20 (SAGTGHFYTTT) the composition is skewed to polar residues.

The protein belongs to the bacterial ribosomal protein bL33 family.

The chain is Large ribosomal subunit protein bL33 from Chromobacterium violaceum (strain ATCC 12472 / DSM 30191 / JCM 1249 / CCUG 213 / NBRC 12614 / NCIMB 9131 / NCTC 9757 / MK).